Here is an 89-residue protein sequence, read N- to C-terminus: MANIKSKIKSIKTMEKARKRNSMIKSRVKTSIKKAKLAITQDSDNAKKLVSDAHHEIHKAKSKGVFHKNTALRKSSRLDLFFNKHMKSA.

Composition is skewed to basic residues over residues 1-10 (MANIKSKIKS) and 17-29 (ARKR…SRVK). Positions 1–29 (MANIKSKIKSIKTMEKARKRNSMIKSRVK) are disordered.

This sequence belongs to the bacterial ribosomal protein bS20 family.

In terms of biological role, binds directly to 16S ribosomal RNA. The protein is Small ribosomal subunit protein bS20 of Mycoplasmopsis pulmonis (strain UAB CTIP) (Mycoplasma pulmonis).